The chain runs to 502 residues: Probable cytosol aminopeptidase (502 aa).

Residues K267 and D272 each coordinate Mn(2+). Residue K279 is part of the active site. Mn(2+)-binding residues include D290, D349, and E351. R353 is a catalytic residue.

The protein belongs to the peptidase M17 family. It depends on Mn(2+) as a cofactor.

Its subcellular location is the cytoplasm. It catalyses the reaction Release of an N-terminal amino acid, Xaa-|-Yaa-, in which Xaa is preferably Leu, but may be other amino acids including Pro although not Arg or Lys, and Yaa may be Pro. Amino acid amides and methyl esters are also readily hydrolyzed, but rates on arylamides are exceedingly low.. It carries out the reaction Release of an N-terminal amino acid, preferentially leucine, but not glutamic or aspartic acids.. In terms of biological role, presumably involved in the processing and regular turnover of intracellular proteins. Catalyzes the removal of unsubstituted N-terminal amino acids from various peptides. In Aeromonas salmonicida (strain A449), this protein is Probable cytosol aminopeptidase.